Consider the following 137-residue polypeptide: Golgin subfamily A member 7 (137 aa).

2 S-palmitoyl cysteine lipidation sites follow: Cys69 and Cys72.

It belongs to the ERF4 family. As to quaternary structure, interacts with GOLGA3. Interacts with ZDHHC9. In terms of processing, palmitoylated on Cys-69 and Cys-72; which is required for Golgi localization and interaction with GOLGA3.

The protein localises to the golgi apparatus membrane. May be involved in protein transport from Golgi to cell surface. The ZDHHC9-GOLGA7 complex is a palmitoyltransferase specific for HRAS and NRAS. The polypeptide is Golgin subfamily A member 7 (Golga7) (Rattus norvegicus (Rat)).